Consider the following 217-residue polypeptide: Monomethylamine corrinoid protein 2 (217 aa).

The B12-binding N-terminal domain maps to 1–91 (MTNTEIFDKL…ELEKNKKEGD (91 aa)). The region spanning 93–217 (AGLAITFVAE…AAKVALEVMK (125 aa)) is the B12-binding domain. Histidine 106 serves as a coordination point for methylcob(III)alamin.

This sequence belongs to the methylamine corrinoid protein family. As to quaternary structure, can form a complex with MtmB.

Its pathway is one-carbon metabolism; methanogenesis from methylamine. Acts as a methyl group carrier between MtmB and MtbA. This chain is Monomethylamine corrinoid protein 2 (mtmC2), found in Methanosarcina barkeri.